A 172-amino-acid chain; its full sequence is Translation initiation factor IF-3 (172 aa).

The protein belongs to the IF-3 family. In terms of assembly, monomer.

The protein resides in the cytoplasm. Its function is as follows. IF-3 binds to the 30S ribosomal subunit and shifts the equilibrium between 70S ribosomes and their 50S and 30S subunits in favor of the free subunits, thus enhancing the availability of 30S subunits on which protein synthesis initiation begins. The protein is Translation initiation factor IF-3 of Lactobacillus johnsonii (strain CNCM I-12250 / La1 / NCC 533).